The following is a 76-amino-acid chain: ATP synthase subunit 9, mitochondrial (76 aa).

The next 2 membrane-spanning stretches (helical) occupy residues 14–34 (ISTIGLLGAGIGIAIVFAALI) and 52–72 (ILGFALSEATGLFCLMISFLL).

This sequence belongs to the ATPase C chain family. In terms of assembly, F-type ATPases have 2 components, CF(1) - the catalytic core - and CF(0) - the membrane proton channel. CF(1) has five subunits: alpha(3), beta(3), gamma(1), delta(1), epsilon(1). CF(0) has three main subunits: a, b and c.

It is found in the mitochondrion membrane. Mitochondrial membrane ATP synthase (F(1)F(0) ATP synthase or Complex V) produces ATP from ADP in the presence of a proton gradient across the membrane which is generated by electron transport complexes of the respiratory chain. F-type ATPases consist of two structural domains, F(1) - containing the extramembraneous catalytic core and F(0) - containing the membrane proton channel, linked together by a central stalk and a peripheral stalk. During catalysis, ATP synthesis in the catalytic domain of F(1) is coupled via a rotary mechanism of the central stalk subunits to proton translocation. Part of the complex F(0) domain. A homomeric c-ring of probably 10 subunits is part of the complex rotary element. In Vanderwaltozyma polyspora (strain ATCC 22028 / DSM 70294 / BCRC 21397 / CBS 2163 / NBRC 10782 / NRRL Y-8283 / UCD 57-17) (Kluyveromyces polysporus), this protein is ATP synthase subunit 9, mitochondrial (ATP9).